Here is a 123-residue protein sequence, read N- to C-terminus: Small ribosomal subunit protein uS12cz/uS12cy (123 aa).

It belongs to the universal ribosomal protein uS12 family. As to quaternary structure, part of the 30S ribosomal subunit.

It is found in the plastid. It localises to the chloroplast. Its function is as follows. With S4 and S5 plays an important role in translational accuracy. Located at the interface of the 30S and 50S subunits. This Drimys granadensis protein is Small ribosomal subunit protein uS12cz/uS12cy (rps12-A).